The following is a 605-amino-acid chain: MVSVFLSTLLLAAATVQAYLPAQQIDVQSSLLSDPSKVAGKTYDYIIAGGGLTGLTVAAKLTENPKIKVLVIEKGFYESNDGAIIEDPNAYGQIFGTTVDQNYLTVPLINNRTNNIKAGKGLGGSTLINGDSWTRPDKVQIDSWEKVFGMEGWNWDSMFEYMKKAEAARAPTAAQLAAGHYFNATCHGTNGTVQSGARDNGQPWSPIMKALMNTVSALGVPVQQDFLCGHPRGVSMIMNNVDENQVRVDAARAWLLPSYQRPNLEILTGQMVGKVLFKQTASGPQAVGVNFGTNKAVNFDVFAKHEVLLAAGSAISPLILEYSGIGLKSVLDQANVTQLLDLPVGINMQDQTTTTVSSRASAAGAGQGQAVFFANFTETFGDYAPQARELLNTKLDQWAEETVARGGFHNVTALKVQYENYRNWLLDEDVAFAELFMDTEGKINFDLWDLIPFTRGSVHILSSDPYLWQFANDPKFFLNEFDLLGQAAASKLARDLTSQGAMKEYFAGETLPGYNLVENATLSQWSDYVLQNFRPNWHAVSSCSMMSRELGGVVDATAKVYGTQGLRVIDGSIPPTQVSSHVMTIFYGMALKVADAILDDYAKSA.

An N-terminal signal peptide occupies residues 1-18; that stretch reads MVSVFLSTLLLAAATVQA. Positions 52, 53, and 73 each coordinate FAD. A glycan (N-linked (GlcNAc...) asparagine) is linked at N111. Residues S125, N129, G130, and S132 each coordinate FAD. N183 and N190 each carry an N-linked (GlcNAc...) asparagine glycan. Residues C186 and C228 are joined by a disulfide bond. V272 contacts FAD. N335, N375, N410, and N519 each carry an N-linked (GlcNAc...) asparagine glycan. H538 serves as the catalytic Proton acceptor. O2 contacts are provided by K559 and V560. G571 and M583 together coordinate FAD.

This sequence belongs to the GMC oxidoreductase family. In terms of assembly, homodimer. It depends on FAD as a cofactor.

The protein localises to the secreted. Its subcellular location is the cell wall. It localises to the cytoplasmic vesicle. It carries out the reaction beta-D-glucose + O2 = D-glucono-1,5-lactone + H2O2. Glucose oxidase catalyzes the oxidation of beta-D-glucose to D-glucono-delta-lactone and hydrogen peroxide in the presence of molecular oxygen. D-glucono-delta-lactone is sequentially hydrolyzed by lactonase to D-gluconic acid, and the resulting hydrogen peroxide is hydrolyzed by catalase to oxygen and water. Glucose oxidase alone indirectly causes toxicity in the presence of glucose and is the active compound of the antifungal antibiotic talaron. Responsible for inhibition of germination of microsclerotia of Verticillium dahliae. The chain is Glucose oxidase from Talaromyces flavus.